Consider the following 393-residue polypeptide: ATP phosphoribosyltransferase regulatory subunit (393 aa).

This sequence belongs to the class-II aminoacyl-tRNA synthetase family. HisZ subfamily. In terms of assembly, heteromultimer composed of HisG and HisZ subunits.

Its subcellular location is the cytoplasm. It participates in amino-acid biosynthesis; L-histidine biosynthesis; L-histidine from 5-phospho-alpha-D-ribose 1-diphosphate: step 1/9. Functionally, required for the first step of histidine biosynthesis. May allow the feedback regulation of ATP phosphoribosyltransferase activity by histidine. The sequence is that of ATP phosphoribosyltransferase regulatory subunit from Shouchella clausii (strain KSM-K16) (Alkalihalobacillus clausii).